A 66-amino-acid chain; its full sequence is Ocellatin-PT3 (66 aa).

The N-terminal stretch at 1-22 (MAFLKKSLFLVLFLGLVSLSIC) is a signal peptide. Positions 23–39 (DEEKRQDEDDDDDDDEE) are excised as a propeptide. The residue at position 66 (Val-66) is a Valine amide.

Expressed by the skin glands.

Its subcellular location is the secreted. Its function is as follows. Has antibacterial activity against Gram-negative bacterium E.coli ATCC 25922 (MIC=320 uM) but not against S.pneumoniae ATCC 700603, S.choleraesuis ATCC 14028 or Gram-positive bacterium S.aureus ATCC 29313. Shows no hemolytic activity and no cytotoxicity. This is Ocellatin-PT3 from Leptodactylus pustulatus (Ceara white-lipped frog).